Consider the following 444-residue polypeptide: Phosphoglucosamine mutase (444 aa).

S102 serves as the catalytic Phosphoserine intermediate. Positions 102, 241, 243, and 245 each coordinate Mg(2+). Residue S102 is modified to Phosphoserine.

Belongs to the phosphohexose mutase family. Mg(2+) is required as a cofactor. Activated by phosphorylation.

It carries out the reaction alpha-D-glucosamine 1-phosphate = D-glucosamine 6-phosphate. Functionally, catalyzes the conversion of glucosamine-6-phosphate to glucosamine-1-phosphate. This is Phosphoglucosamine mutase from Paracidovorax citrulli (strain AAC00-1) (Acidovorax citrulli).